The chain runs to 572 residues: Proline--tRNA ligase (572 aa).

It belongs to the class-II aminoacyl-tRNA synthetase family. ProS type 1 subfamily. As to quaternary structure, homodimer.

It localises to the cytoplasm. It catalyses the reaction tRNA(Pro) + L-proline + ATP = L-prolyl-tRNA(Pro) + AMP + diphosphate. In terms of biological role, catalyzes the attachment of proline to tRNA(Pro) in a two-step reaction: proline is first activated by ATP to form Pro-AMP and then transferred to the acceptor end of tRNA(Pro). As ProRS can inadvertently accommodate and process non-cognate amino acids such as alanine and cysteine, to avoid such errors it has two additional distinct editing activities against alanine. One activity is designated as 'pretransfer' editing and involves the tRNA(Pro)-independent hydrolysis of activated Ala-AMP. The other activity is designated 'posttransfer' editing and involves deacylation of mischarged Ala-tRNA(Pro). The misacylated Cys-tRNA(Pro) is not edited by ProRS. The chain is Proline--tRNA ligase from Yersinia pestis bv. Antiqua (strain Antiqua).